Consider the following 572-residue polypeptide: Na(+)/citrate cotransporter (572 aa).

Transmembrane regions (helical) follow at residues 13-33, 53-73, 80-100, 124-144, 218-238, 255-275, 315-335, and 357-377; these read SFAI…LIPD, VIPV…LKVL, IQYM…AVAV, LMLG…NTAA, SASI…VLLG, SWFG…WLWL, SLSY…ILWF, and HITD…IPSQ. Asn382 carries an N-linked (GlcNAc...) asparagine glycan. Transmembrane regions (helical) follow at residues 410–430, 443–463, 491–511, and 532–552; these read VPWD…GCET, PLRL…VAMT, PLYV…LPVA, and TGLI…NTWG. N-linked (GlcNAc...) asparagine glycosylation occurs at Asn566.

This sequence belongs to the SLC13A/DASS transporter (TC 2.A.47) family. NADC subfamily. In terms of assembly, homodimer.

The protein localises to the cell membrane. The enzyme catalyses citrate(out) + 4 Na(+)(out) = citrate(in) + 4 Na(+)(in). Inhibited by Li(+). Functionally, high-affinity sodium/citrate cotransporter that mediates citrate entry into cells, which is a critical participant of biochemical pathways. May function in various metabolic processes in which citrate has a critical role such as energy production (Krebs cycle), fatty acid synthesis, cholesterol synthesis, glycolysis, and gluconeogenesis. Transports citrate into the cell in a Na(+)-dependent manner, recognizing the trivalent form of citrate (physiological pH) rather than the divalent form. Can recognizes succinate as a substrate, but its affinity for succinate is several fold lower than for citrate. The stoichiometry is probably 4 Na(+) for each carboxylate, irrespective of whether the translocated substrate is divalent or trivalent, rendering the process electrogenic. Involved in the regulation of citrate levels in the brain. The protein is Na(+)/citrate cotransporter (Slc13a5) of Mus musculus (Mouse).